We begin with the raw amino-acid sequence, 46 residues long: Esculentin-1SEa (46 aa).

The cysteines at positions 40 and 46 are disulfide-linked.

As to expression, expressed by the skin glands.

The protein localises to the secreted. Mast cell degranulating peptide. Causes histamine release from rat peritoneal mast cells in vitro. Has antibacterial activity against the Gram-negative bacterium E.coli K12 and Gram-positive bacterium M.luteus NCT C2665. The sequence is that of Esculentin-1SEa from Lithobates sevosus (Dusky gopher frog).